The chain runs to 564 residues: Kelch repeat and BTB domain-containing protein 1 (564 aa).

The 68-residue stretch at 21–88 folds into the BTB domain; sequence CDINIVINDE…IYGIPLSLTN (68 aa). Positions 123 to 219 constitute a BACK domain; sequence CIDFYIYADK…SLLSPQVIKS (97 aa). Kelch repeat units lie at residues 252-297, 298-346, 347-395, 397-441, and 442-492; these read IELI…VLDN, IIYM…ADDE, YIYC…MLNG, IYVI…VHDG, and KIYI…STHN.

Interacts (via BTB domain) with host CUL3.

The protein resides in the host cytoplasm. Functionally, probable substrate-specific adapter of CUL3-containing E3 ubiquitin-protein ligases which mediate the ubiquitination and subsequent proteasomal degradation of host target proteins. The protein is Kelch repeat and BTB domain-containing protein 1 (KBTB1) of Bos taurus (Bovine).